The following is a 404-amino-acid chain: Succinyl-diaminopimelate desuccinylase (404 aa).

H80 lines the Zn(2+) pocket. Residue D82 is part of the active site. D113 contacts Zn(2+). Residue E147 is the Proton acceptor of the active site. Residues E148, E176, and H373 each contribute to the Zn(2+) site.

This sequence belongs to the peptidase M20A family. DapE subfamily. In terms of assembly, homodimer. It depends on Zn(2+) as a cofactor. Co(2+) serves as cofactor.

The catalysed reaction is N-succinyl-(2S,6S)-2,6-diaminopimelate + H2O = (2S,6S)-2,6-diaminopimelate + succinate. It participates in amino-acid biosynthesis; L-lysine biosynthesis via DAP pathway; LL-2,6-diaminopimelate from (S)-tetrahydrodipicolinate (succinylase route): step 3/3. In terms of biological role, catalyzes the hydrolysis of N-succinyl-L,L-diaminopimelic acid (SDAP), forming succinate and LL-2,6-diaminopimelate (DAP), an intermediate involved in the bacterial biosynthesis of lysine and meso-diaminopimelic acid, an essential component of bacterial cell walls. This Allorhizobium ampelinum (strain ATCC BAA-846 / DSM 112012 / S4) (Agrobacterium vitis (strain S4)) protein is Succinyl-diaminopimelate desuccinylase.